The sequence spans 286 residues: GTP cyclohydrolase MptA (286 aa).

The protein belongs to the GTP cyclohydrolase IV family. In terms of assembly, homodimer. Fe(2+) serves as cofactor.

The enzyme catalyses GTP + H2O = 7,8-dihydroneopterin 2',3'-cyclic phosphate + formate + diphosphate + H(+). It functions in the pathway cofactor biosynthesis; 5,6,7,8-tetrahydromethanopterin biosynthesis. Its function is as follows. Converts GTP to 7,8-dihydro-D-neopterin 2',3'-cyclic phosphate, the first intermediate in the biosynthesis of coenzyme methanopterin. This is GTP cyclohydrolase MptA from Thermoplasma acidophilum (strain ATCC 25905 / DSM 1728 / JCM 9062 / NBRC 15155 / AMRC-C165).